The chain runs to 617 residues: 5-hydroxytryptamine receptor 2B (617 aa).

The Extracellular segment spans residues 1–95 (MLKTVTTAMA…LLVKMIAMAV (95 aa)). Asparagine 31, asparagine 41, asparagine 51, and asparagine 58 each carry an N-linked (GlcNAc...) asparagine glycan. Residues 96 to 116 (VLGLMILVTIIGNVFVIAAII) traverse the membrane as a helical segment. Residues 117 to 128 (LERNLQNVANYL) lie on the Cytoplasmic side of the membrane. A helical membrane pass occupies residues 129-149 (VASLAVADLFVACLVMPLGAV). Residues 150 to 164 (YEISNGWILGPELCD) are Extracellular-facing. Cysteines 163 and 242 form a disulfide. The helical transmembrane segment at 165–185 (IWTSCDVLCCTASILHLVAIA) threads the bilayer. The Cytoplasmic portion of the chain corresponds to 186-205 (ADRYWTVTNIDYNNLRTPRR). The helical transmembrane segment at 206-226 (VFLMIFCVWFAALIVSLAPQF) threads the bilayer. The Extracellular portion of the chain corresponds to 227–256 (GWKDPDYMKRIEEQHCMVSQDVGYQIFATC). The chain crosses the membrane as a helical span at residues 257–277 (CTFYVPLLVILFLYWKIYIIA). The Cytoplasmic portion of the chain corresponds to 278-534 (RKRIQRRAQK…EAKRERKAAQ (257 aa)). The interval 309–336 (RSKRRAERKRLEAGERTPVDGDGTGGQL) is disordered. A compositionally biased stretch (basic and acidic residues) spans 317 to 327 (KRLEAGERTPV). Residues 535–555 (TLAIITGAFVICWLPFFVMAL) traverse the membrane as a helical segment. Over 556–570 (TMSLCKECEIHTAVA) the chain is Extracellular. Residues 571–591 (SLFLWLGYFNSTLNPVIYTIF) traverse the membrane as a helical segment. Over 592 to 617 (NPEFRRAFKRILFGRKAAARARSAKI) the chain is Cytoplasmic.

Belongs to the G-protein coupled receptor 1 family.

Its subcellular location is the cell membrane. This is one of the several different receptors for 5-hydroxytryptamine (serotonin), a biogenic hormone that functions as a neurotransmitter, a hormone, and a mitogen. The activity of this receptor is mediated by G proteins which inhibit adenylate cyclase. In Drosophila melanogaster (Fruit fly), this protein is 5-hydroxytryptamine receptor 2B (5-HT1B).